The following is a 408-amino-acid chain: NADH-quinone oxidoreductase subunit D (408 aa).

It belongs to the complex I 49 kDa subunit family. NDH-1 is composed of 14 different subunits. Subunits NuoB, C, D, E, F, and G constitute the peripheral sector of the complex.

The protein localises to the cell inner membrane. The catalysed reaction is a quinone + NADH + 5 H(+)(in) = a quinol + NAD(+) + 4 H(+)(out). NDH-1 shuttles electrons from NADH, via FMN and iron-sulfur (Fe-S) centers, to quinones in the respiratory chain. The immediate electron acceptor for the enzyme in this species is believed to be ubiquinone. Couples the redox reaction to proton translocation (for every two electrons transferred, four hydrogen ions are translocated across the cytoplasmic membrane), and thus conserves the redox energy in a proton gradient. This chain is NADH-quinone oxidoreductase subunit D, found in Campylobacter jejuni subsp. jejuni serotype O:23/36 (strain 81-176).